Reading from the N-terminus, the 291-residue chain is Lys-63-specific deubiquitinase BRCC36 (291 aa).

Ala2 is subject to N-acetylalanine. The 168-residue stretch at 12–179 folds into the MPN domain; it reads VHLESDAFLV…YTCFQSVQAQ (168 aa). 3 residues coordinate Zn(2+): His122, His124, and Asp135. The JAMM motif motif lies at 122-135; sequence HSHPHITVWPSHVD. Residue Ser233 is modified to Phosphoserine.

Belongs to the peptidase M67A family. BRCC36 subfamily. In terms of assembly, component of the ARISC complex, at least composed of UIMC1/RAP80, ABRAXAS1, BRCC3/BRCC36, BABAM2 and BABAM1/NBA1. Component of the BRCA1-A complex, at least composed of BRCA1, BARD1, UIMC1/RAP80, ABRAXAS1, BRCC3/BRCC36, BABAM2 and BABAM1/NBA1. In the BRCA1-A complex, interacts directly with ABRAXAS1 and BABAM2. Component of the BRISC complex, at least composed of ABRAXAS2, BRCC3/BRCC36, BABAM2 and BABAM1/NBA1. Identified in a complex with SHMT2 and the other subunits of the BRISC complex. In the BRISC complex, interacts directly with ABRAXAS2. Identified in a complex with ABRAXAS2 and NUMA1. The BRISC complex interacts with the CSN complex. Component of the BRCA1/BRCA2 containing complex (BRCC), which also contains BRCA1, BRCA2, BARD1, BABAM2 and RAD51. BRCC is a ubiquitin E3 ligase complex that enhances cellular survival following DNA damage. Interacts with BRCA1. Binds polyubiquitin. Interacts with PWWP2B. Interacts with HDAC1; this interaction is enhanced in the presence of PWWP2B. Zn(2+) is required as a cofactor.

The protein localises to the nucleus. The protein resides in the cytoplasm. Its subcellular location is the cytoskeleton. It is found in the spindle pole. Its function is as follows. Metalloprotease that specifically cleaves 'Lys-63'-linked polyubiquitin chains. Does not have activity toward 'Lys-48'-linked polyubiquitin chains. Component of the BRCA1-A complex, a complex that specifically recognizes 'Lys-63'-linked ubiquitinated histones H2A and H2AX at DNA lesions sites, leading to target the BRCA1-BARD1 heterodimer to sites of DNA damage at double-strand breaks (DSBs). In the BRCA1-A complex, it specifically removes 'Lys-63'-linked ubiquitin on histones H2A and H2AX, antagonizing the RNF8-dependent ubiquitination at double-strand breaks (DSBs). Catalytic subunit of the BRISC complex, a multiprotein complex that specifically cleaves 'Lys-63'-linked ubiquitin in various substrates. Mediates the specific 'Lys-63'-specific deubiquitination associated with the COP9 signalosome complex (CSN), via the interaction of the BRISC complex with the CSN complex. The BRISC complex is required for normal mitotic spindle assembly and microtubule attachment to kinetochores via its role in deubiquitinating NUMA1. Plays a role in interferon signaling via its role in the deubiquitination of the interferon receptor IFNAR1; deubiquitination increases IFNAR1 activity by enhancing its stability and cell surface expression. Acts as a regulator of the NLRP3 inflammasome by mediating deubiquitination of NLRP3, leading to NLRP3 inflammasome assembly. Down-regulates the response to bacterial lipopolysaccharide (LPS) via its role in IFNAR1 deubiquitination. Deubiquitinates HDAC1 and PWWP2B leading to their stabilization. This chain is Lys-63-specific deubiquitinase BRCC36 (Brcc3), found in Rattus norvegicus (Rat).